We begin with the raw amino-acid sequence, 536 residues long: Austinoid biosynthesis cluster protein W (536 aa).

The signal sequence occupies residues 1–19 (MKHPTVALLGVGMLGCAAA). 5 disordered regions span residues 141 to 164 (GSAP…PGFP), 185 to 220 (SLPG…PGFS), 261 to 302 (FGVP…ASNG), 385 to 423 (PGSA…ASNG), and 491 to 536 (PSPT…SSAE). Over residues 195–208 (SGPSQAAAAPSTGD) the composition is skewed to low complexity. Residues 209-220 (SGSGLPGSPGFS) are compositionally biased toward gly residues. Low complexity-rich tracts occupy residues 287-302 (AGNA…ASNG) and 408-423 (AGNA…ASNG).

The protein operates within secondary metabolite biosynthesis; terpenoid biosynthesis. Functionally, part of the gene cluster that mediates the biosynthesis of calidodehydroaustin, a fungal meroterpenoid. The first step of the pathway is the synthesis of 3,5-dimethylorsellinic acid by the polyketide synthase ausA. 3,5-dimethylorsellinic acid is then prenylated by the polyprenyl transferase ausN. Further epoxidation by the FAD-dependent monooxygenase ausM and cyclization by the probable terpene cyclase ausL lead to the formation of protoaustinoid A. Protoaustinoid A is then oxidized to spiro-lactone preaustinoid A3 by the combined action of the FAD-binding monooxygenases ausB and ausC, and the dioxygenase ausE. Acid-catalyzed keto-rearrangement and ring contraction of the tetraketide portion of preaustinoid A3 by ausJ lead to the formation of preaustinoid A4. The aldo-keto reductase ausK, with the help of ausH, is involved in the next step by transforming preaustinoid A4 into isoaustinone which is in turn hydroxylated by the P450 monooxygenase ausI to form austinolide. The cytochrome P450 monooxygenase ausG modifies austinolide to austinol. Austinol is further acetylated to austin by the O-acetyltransferase ausP, which spontaneously changes to dehydroaustin. The cytochrome P450 monooxygenase ausR then converts dehydroaustin is into 7-dehydrodehydroaustin. The hydroxylation catalyzed by ausR permits the O-acetyltransferase ausQ to add an additional acetyl group to the molecule, leading to the formation of acetoxydehydroaustin. The short chain dehydrogenase ausT catalyzes the reduction of the double bond present between carbon atoms 1 and 2 to convert 7-dehydrodehydroaustin into 1,2-dihydro-7-hydroxydehydroaustin. AusQ catalyzes not only an acetylation reaction but also the addition of the PKS ausV diketide product to 1,2-dihydro-7-hydroxydehydroaustin, forming precalidodehydroaustin. Finally, the iron/alpha-ketoglutarate-dependent dioxygenase converts precalidodehydroaustin into calidodehydroaustin. The polypeptide is Austinoid biosynthesis cluster protein W (Aspergillus calidoustus).